The following is a 276-amino-acid chain: NH(3)-dependent NAD(+) synthetase (276 aa).

43–50 (GISGGVDS) contacts ATP. A Mg(2+)-binding site is contributed by Asp-49. Arg-146 is a binding site for deamido-NAD(+). Thr-166 contacts ATP. Glu-171 contributes to the Mg(2+) binding site. Deamido-NAD(+) is bound by residues Lys-179 and Asp-186. Residues Lys-195 and Thr-217 each contribute to the ATP site. Position 266–267 (266–267 (HK)) interacts with deamido-NAD(+).

The protein belongs to the NAD synthetase family. In terms of assembly, homodimer.

It catalyses the reaction deamido-NAD(+) + NH4(+) + ATP = AMP + diphosphate + NAD(+) + H(+). Its pathway is cofactor biosynthesis; NAD(+) biosynthesis; NAD(+) from deamido-NAD(+) (ammonia route): step 1/1. In terms of biological role, catalyzes the ATP-dependent amidation of deamido-NAD to form NAD. Uses ammonia as a nitrogen source. The sequence is that of NH(3)-dependent NAD(+) synthetase from Shewanella pealeana (strain ATCC 700345 / ANG-SQ1).